We begin with the raw amino-acid sequence, 326 residues long: Ribonuclease H2 subunit A (326 aa).

The tract at residues 1–47 is disordered; the sequence is MKDDHDAWEPEELVSDNNSSENELQEDQNSSITFLPPSVNKSNPAKS. Residues 15-47 are compositionally biased toward polar residues; it reads SDNNSSENELQEDQNSSITFLPPSVNKSNPAKS. The RNase H type-2 domain maps to 63-286; that stretch reads PYRLGVDEAG…AKDLLELPSK (224 aa). Positions 69, 70, and 180 each coordinate a divalent metal cation.

This sequence belongs to the RNase HII family. Eukaryotic subfamily. It depends on Mn(2+) as a cofactor. Mg(2+) is required as a cofactor.

The catalysed reaction is Endonucleolytic cleavage to 5'-phosphomonoester.. Its function is as follows. Endonuclease that specifically degrades the RNA of RNA-DNA hybrids. Participates in DNA replication. In Schizosaccharomyces pombe (strain 972 / ATCC 24843) (Fission yeast), this protein is Ribonuclease H2 subunit A (rnh201).